Reading from the N-terminus, the 557-residue chain is Formate--tetrahydrofolate ligase (557 aa).

Position 66-73 (66-73 (TPAGEGKS)) interacts with ATP.

It belongs to the formate--tetrahydrofolate ligase family.

The enzyme catalyses (6S)-5,6,7,8-tetrahydrofolate + formate + ATP = (6R)-10-formyltetrahydrofolate + ADP + phosphate. It participates in one-carbon metabolism; tetrahydrofolate interconversion. The sequence is that of Formate--tetrahydrofolate ligase from Clostridium botulinum (strain ATCC 19397 / Type A).